Consider the following 736-residue polypeptide: Gephyrin (736 aa).

The segment at 14 to 153 is MPT Mo-transferase; that stretch reads QIRVGVLTVS…LPGSKKGSQE (140 aa). Disordered stretches follow at residues 181-232 and 260-290; these read DELE…DSSS and TASL…PKVQ. Over residues 187-199 the composition is skewed to pro residues; sequence PSPPPPLSPPPTT. Positions 261–290 are enriched in polar residues; the sequence is ASLSTTPSESPRAQATSRLSTASCPTPKVQ. The tract at residues 294 to 736 is MPT adenylyltransferase; sequence SSKENILRAS…VVDVMVIGRL (443 aa).

This sequence in the N-terminal section; belongs to the MoaB/Mog family. In the C-terminal section; belongs to the MoeA family. In terms of assembly, homotrimer, homodimer and homooligomer. Interacts with glycine receptors. Mg(2+) serves as cofactor.

It localises to the postsynaptic cell membrane. It is found in the cell membrane. The protein resides in the cytoplasm. Its subcellular location is the cytosol. The protein localises to the cytoskeleton. It localises to the cell projection. It is found in the dendrite. The protein resides in the postsynaptic density. It catalyses the reaction molybdopterin + ATP + H(+) = adenylyl-molybdopterin + diphosphate. It carries out the reaction adenylyl-molybdopterin + molybdate = Mo-molybdopterin + AMP + H(+). It functions in the pathway cofactor biosynthesis; molybdopterin biosynthesis. In terms of biological role, microtubule-associated protein involved in membrane protein-cytoskeleton interactions. It is thought to anchor the inhibitory glycine receptor (GLYR) to subsynaptic microtubules. Acts as a major instructive molecule at inhibitory synapses, where it also clusters GABA type A receptors. Functionally, also has a catalytic activity and catalyzes two steps in the biosynthesis of the molybdenum cofactor. In the first step, molybdopterin is adenylated. Subsequently, molybdate is inserted into adenylated molybdopterin and AMP is released. This Gallus gallus (Chicken) protein is Gephyrin (GPHN).